Here is a 320-residue protein sequence, read N- to C-terminus: Formimidoylglutamase (320 aa).

Histidine 125, aspartate 153, histidine 155, aspartate 157, aspartate 244, and aspartate 246 together coordinate Mn(2+).

The protein belongs to the arginase family. Mn(2+) is required as a cofactor.

The enzyme catalyses N-formimidoyl-L-glutamate + H2O = formamide + L-glutamate. Its pathway is amino-acid degradation; L-histidine degradation into L-glutamate; L-glutamate from N-formimidoyl-L-glutamate (hydrolase route): step 1/1. Catalyzes the conversion of N-formimidoyl-L-glutamate to L-glutamate and formamide. This is Formimidoylglutamase from Rhodococcus opacus (strain B4).